Reading from the N-terminus, the 92-residue chain is Small ribosomal subunit protein bS20 (92 aa).

Positions 1-11 (MANIKSQKKRI) are enriched in basic residues. A disordered region spans residues 1–22 (MANIKSQKKRIRQNEKARLRNK).

It belongs to the bacterial ribosomal protein bS20 family.

In terms of biological role, binds directly to 16S ribosomal RNA. The chain is Small ribosomal subunit protein bS20 from Thermobifida fusca (strain YX).